The primary structure comprises 602 residues: NAD-dependent protein deacetylase sir-2.1 (602 aa).

The interval 25-57 (PEIETMHIENSVEGESGRQRTESTASVNSESWQ) is disordered. Residues 46–57 (ESTASVNSESWQ) are compositionally biased toward polar residues. The region spanning 119 to 374 (KLFTYNSLSD…RDICYALGGS (256 aa)) is the Deacetylase sirtuin-type domain. Residues 144–163 (GAGV…DGIY) and 228–231 (QNID) contribute to the NAD(+) site. Catalysis depends on His246, which acts as the Proton acceptor. Residues Cys254, Cys257, Cys278, and Cys281 each coordinate Zn(2+). NAD(+) contacts are provided by residues 318 to 320 (GSS), 343 to 345 (NRE), and Cys360. Disordered regions lie at residues 411-468 (QERR…SDEV) and 520-551 (RNRH…RSQS).

Belongs to the sirtuin family. Class I subfamily. As to quaternary structure, interacts with ftt-2 and par-5. Interacts with daf-16 following heat-shock, which causes daf-16 to accumulate in the nucleus. Interaction with daf-16 is promoted by ftt-2. The cofactor is Zn(2+).

Its subcellular location is the nucleus. It carries out the reaction N(6)-acetyl-L-lysyl-[protein] + NAD(+) + H2O = 2''-O-acetyl-ADP-D-ribose + nicotinamide + L-lysyl-[protein]. NAD-dependent deacetylase. Required for a reduction of the 'Lys-16' acetylation of histone H4 (H4K16ac) on dosage-compensated X chromosomes in hermaphrodites. Functions upstream of daf-16 in the insulin-like signaling pathway, promoting daf-16 mediated transcriptional activation and increased life-span. May also regulate life-span independently of daf-16 by modulating the transcription of genes involved in the stress response of the endoplasmic reticulum (ER). Acts upstream of the nicotinic acid metabolism pathway, which may be linked to the regulation of longevity. Plays a role in ascaroside-mediated longevity and stress resistance. This Caenorhabditis briggsae protein is NAD-dependent protein deacetylase sir-2.1 (sir-2.1).